Consider the following 177-residue polypeptide: Acireductone dioxygenase (177 aa).

The disordered stretch occupies residues 1 to 23 (MVRAWYMDDSDADQRAPHMTDPP). The Fe(2+) site is built by histidine 86, histidine 88, glutamate 92, and histidine 131. Residues histidine 86, histidine 88, glutamate 92, and histidine 131 each contribute to the Ni(2+) site.

This sequence belongs to the acireductone dioxygenase (ARD) family. It depends on Fe(2+) as a cofactor. Ni(2+) is required as a cofactor.

It is found in the cytoplasm. It localises to the nucleus. The catalysed reaction is 1,2-dihydroxy-5-(methylsulfanyl)pent-1-en-3-one + O2 = 4-methylsulfanyl-2-oxobutanoate + formate + 2 H(+). The enzyme catalyses 1,2-dihydroxy-5-(methylsulfanyl)pent-1-en-3-one + O2 = 3-(methylsulfanyl)propanoate + CO + formate + 2 H(+). It functions in the pathway amino-acid biosynthesis; L-methionine biosynthesis via salvage pathway; L-methionine from S-methyl-5-thio-alpha-D-ribose 1-phosphate: step 5/6. Functionally, catalyzes 2 different reactions between oxygen and the acireductone 1,2-dihydroxy-3-keto-5-methylthiopentene (DHK-MTPene) depending upon the metal bound in the active site. Fe-containing acireductone dioxygenase (Fe-ARD) produces formate and 2-keto-4-methylthiobutyrate (KMTB), the alpha-ketoacid precursor of methionine in the methionine recycle pathway. Ni-containing acireductone dioxygenase (Ni-ARD) produces methylthiopropionate, carbon monoxide and formate, and does not lie on the methionine recycle pathway. The sequence is that of Acireductone dioxygenase from Branchiostoma floridae (Florida lancelet).